The chain runs to 318 residues: Transaldolase (318 aa).

The active-site Schiff-base intermediate with substrate is the K132.

It belongs to the transaldolase family. Type 1 subfamily. As to quaternary structure, homodimer.

Its subcellular location is the cytoplasm. It catalyses the reaction D-sedoheptulose 7-phosphate + D-glyceraldehyde 3-phosphate = D-erythrose 4-phosphate + beta-D-fructose 6-phosphate. It functions in the pathway carbohydrate degradation; pentose phosphate pathway; D-glyceraldehyde 3-phosphate and beta-D-fructose 6-phosphate from D-ribose 5-phosphate and D-xylulose 5-phosphate (non-oxidative stage): step 2/3. Functionally, transaldolase is important for the balance of metabolites in the pentose-phosphate pathway. In Shewanella sp. (strain MR-4), this protein is Transaldolase.